Here is a 30-residue protein sequence, read N- to C-terminus: Photosystem I reaction center subunit XII (30 aa).

The chain crosses the membrane as a helical span at residues 7-26 (IMVALFAALFTGILALRLGT).

This sequence belongs to the PsaM family.

It localises to the plastid. Its subcellular location is the chloroplast thylakoid membrane. The protein is Photosystem I reaction center subunit XII of Mesostigma viride (Green alga).